Here is a 513-residue protein sequence, read N- to C-terminus: Cytochrome P450 4d10 (513 aa).

Heme is bound by residues glutamate 317 and cysteine 457.

Belongs to the cytochrome P450 family. The cofactor is heme.

Its subcellular location is the endoplasmic reticulum membrane. It localises to the microsome membrane. In terms of biological role, may play an important role in the maintenance of specific insect-host plant relationships. May be involved in xenobiotic metabolism. The protein is Cytochrome P450 4d10 (Cyp4d10) of Drosophila mettleri (Fruit fly).